The chain runs to 157 residues: MNQHSHKDYETVRIAVVRARWHADIVDQCVSAFEAEMADIGGDRFAVDVFDVPGAYEIPLHARTLAETGRYGAVLGTAFVVNGGIYRHEFVASAVIDGMMNVQLSTGVPVLSAVLTPHNYHDSAEHHRFFFEHFTVKGKEAARACVEILAAREKIAA.

5-amino-6-(D-ribitylamino)uracil-binding positions include Trp-21, 55–57 (AYE), and 79–81 (FVV). The active-site Proton donor is the Arg-87. Ser-112 serves as a coordination point for 5-amino-6-(D-ribitylamino)uracil. A (2S)-2-hydroxy-3-oxobutyl phosphate-binding site is contributed by His-126.

This sequence belongs to the DMRL synthase family. In terms of assembly, homodecamer, arranged as a dimer of pentamers.

The enzyme catalyses (2S)-2-hydroxy-3-oxobutyl phosphate + 5-amino-6-(D-ribitylamino)uracil = 6,7-dimethyl-8-(1-D-ribityl)lumazine + phosphate + 2 H2O + H(+). The protein operates within cofactor biosynthesis; riboflavin biosynthesis; riboflavin from 2-hydroxy-3-oxobutyl phosphate and 5-amino-6-(D-ribitylamino)uracil: step 1/2. Functionally, catalyzes the formation of 6,7-dimethyl-8-ribityllumazine by condensation of 5-amino-6-(D-ribitylamino)uracil with 3,4-dihydroxy-2-butanone 4-phosphate. This is the penultimate step in the biosynthesis of riboflavin. In Mesorhizobium japonicum (strain LMG 29417 / CECT 9101 / MAFF 303099) (Mesorhizobium loti (strain MAFF 303099)), this protein is 6,7-dimethyl-8-ribityllumazine synthase 2 (ribH2).